The chain runs to 471 residues: Siroheme synthase (471 aa).

The tract at residues 1 to 203 (MDYLPLFADI…GDWESAEKTL (203 aa)) is precorrin-2 dehydrogenase /sirohydrochlorin ferrochelatase. Residues 22–23 (EV) and 43–44 (KN) each bind NAD(+). Serine 128 is modified (phosphoserine). The segment at 215–471 (GEIILVGAGP…DTKSSLINLA (257 aa)) is uroporphyrinogen-III C-methyltransferase. Proline 224 serves as a coordination point for S-adenosyl-L-methionine. Aspartate 247 serves as the catalytic Proton acceptor. Residue lysine 269 is the Proton donor of the active site. S-adenosyl-L-methionine is bound by residues 300-302 (GGD), isoleucine 305, 330-331 (TA), methionine 382, and alanine 411.

It in the N-terminal section; belongs to the precorrin-2 dehydrogenase / sirohydrochlorin ferrochelatase family. In the C-terminal section; belongs to the precorrin methyltransferase family.

It catalyses the reaction uroporphyrinogen III + 2 S-adenosyl-L-methionine = precorrin-2 + 2 S-adenosyl-L-homocysteine + H(+). The catalysed reaction is precorrin-2 + NAD(+) = sirohydrochlorin + NADH + 2 H(+). It carries out the reaction siroheme + 2 H(+) = sirohydrochlorin + Fe(2+). Its pathway is cofactor biosynthesis; adenosylcobalamin biosynthesis; precorrin-2 from uroporphyrinogen III: step 1/1. It functions in the pathway cofactor biosynthesis; adenosylcobalamin biosynthesis; sirohydrochlorin from precorrin-2: step 1/1. The protein operates within porphyrin-containing compound metabolism; siroheme biosynthesis; precorrin-2 from uroporphyrinogen III: step 1/1. It participates in porphyrin-containing compound metabolism; siroheme biosynthesis; siroheme from sirohydrochlorin: step 1/1. Its pathway is porphyrin-containing compound metabolism; siroheme biosynthesis; sirohydrochlorin from precorrin-2: step 1/1. Multifunctional enzyme that catalyzes the SAM-dependent methylations of uroporphyrinogen III at position C-2 and C-7 to form precorrin-2 via precorrin-1. Then it catalyzes the NAD-dependent ring dehydrogenation of precorrin-2 to yield sirohydrochlorin. Finally, it catalyzes the ferrochelation of sirohydrochlorin to yield siroheme. The chain is Siroheme synthase from Zymomonas mobilis subsp. mobilis (strain ATCC 31821 / ZM4 / CP4).